A 515-amino-acid polypeptide reads, in one-letter code: Hyccin (515 aa).

Residues 358–378 (STSQSALSNSSNTSSKNLLGK) are compositionally biased toward low complexity. Disordered stretches follow at residues 358-410 (STSQ…TQRA) and 491-515 (TDLP…LSTD). Over residues 389 to 403 (AGREKEGETCREHLS) the composition is skewed to basic and acidic residues. The segment covering 498–515 (KQPNQQRPPSISITLSTD) has biased composition (polar residues).

It belongs to the Hyccin family. In terms of assembly, component of a phosphatidylinositol 4-kinase (PI4K) complex.

The protein resides in the cytoplasm. The protein localises to the cytosol. It is found in the cell membrane. Its function is as follows. Component of a complex required to localize phosphatidylinositol 4-kinase (PI4K) to the plasma membrane. The complex acts as a regulator of phosphatidylinositol 4-phosphate (PtdIns(4)P) synthesis. This Gallus gallus (Chicken) protein is Hyccin (HYCC1).